A 626-amino-acid chain; its full sequence is UvrABC system protein C (626 aa).

In terms of domain architecture, GIY-YIG spans 26-105 (PEPGVYFMRD…IKQHQPHFNV (80 aa)). The UVR domain maps to 215-250 (SELINTLSLQMEQAAEDLNFEQAARLRDQIKGLQGL).

Belongs to the UvrC family. Interacts with UvrB in an incision complex.

Its subcellular location is the cytoplasm. Its function is as follows. The UvrABC repair system catalyzes the recognition and processing of DNA lesions. UvrC both incises the 5' and 3' sides of the lesion. The N-terminal half is responsible for the 3' incision and the C-terminal half is responsible for the 5' incision. The polypeptide is UvrABC system protein C (Acaryochloris marina (strain MBIC 11017)).